We begin with the raw amino-acid sequence, 71 residues long: Small ribosomal subunit protein bS21 (71 aa).

This sequence belongs to the bacterial ribosomal protein bS21 family.

The chain is Small ribosomal subunit protein bS21 from Acidithiobacillus ferrooxidans (strain ATCC 23270 / DSM 14882 / CIP 104768 / NCIMB 8455) (Ferrobacillus ferrooxidans (strain ATCC 23270)).